The primary structure comprises 78 residues: MKTLLLTLLVVTIVCLDLGYSLKCYQHGKVVTCHRDMKFCYHNTGMPFRNLKLILQGCSSSCSETENNKCCSTDRCNK.

An N-terminal signal peptide occupies residues 1-21; sequence MKTLLLTLLVVTIVCLDLGYS. Disulfide bonds link Cys24/Cys40, Cys33/Cys58, Cys62/Cys70, and Cys71/Cys76.

The protein belongs to the three-finger toxin family. Short-chain subfamily. Mambalgin sub-subfamily. In terms of tissue distribution, expressed by the venom gland.

The protein resides in the secreted. This three-finger toxin inhibits ASIC channels. It acts as a gating modifier toxin by decreasing the apparent proton sensitivity of activation and by slightly increasing the apparent proton sensitivity for inactivation. It binds more tightly to the closed state and to a much lesser extent the inactivated/desensitized state of ASIC1a isoform of ASIC1. It interacts directly with the outside surface of the thumb domain of chicken ASIC1a (ASIC1a), but does not insert into the acidic pocket as suggested for mambalgin-2. This binding leads to relocation of the thumb domain that could disrupt the acidic pocket of cASIC1a. It reversibly inhibits rat ASIC1a (IC(50)=3.4-55 nM), rat ASIC1a-ASIC2b (IC(50)=61 nM), rat ASIC1a-ASIC1b (IC(50)=72 nM), human ASIC1a (IC(50)=127-580 nM), chicken ASIC1a (IC(50)=123.6 nM), rat ASIC1b (IC(50)=22.2-203 nM), rat ASIC1a-ASIC2a (IC(50)=152-252 nM). In vivo, it shows a potent naloxone-resistant analgesic effect against acute and inflammatory pain upon central and peripheral injection. In addition, it also has an opioid-independent effect on both thermal and mechanical inflammatory pain after systemic administration and is effective against neuropathic pain. The chain is Mambalgin-1 from Dendroaspis polylepis polylepis (Black mamba).